The primary structure comprises 312 residues: Olfactory receptor 2T10 (312 aa).

Residues 1–25 (MRLANQTLGGDFFLLGIFSQISHPG) are Extracellular-facing. Asn-5 carries an N-linked (GlcNAc...) asparagine glycan. A helical transmembrane segment spans residues 26–49 (RLCLLIFSIFLMAVSWNITLILLI). At 50-57 (HIDSSLHT) the chain is on the cytoplasmic side. Residues 58–79 (PMYFFINQLSLIDLTYISVTVP) traverse the membrane as a helical segment. Residues 80–100 (KMLVNQLAKDKTISVLGCGTQ) lie on the Extracellular side of the membrane. Cys-97 and Cys-189 are disulfide-bonded. Residues 101 to 120 (MYFYLQLGGAECCLLAAMAY) traverse the membrane as a helical segment. Over 121 to 139 (DRYVAICHPLRYSVLMSHR) the chain is Cytoplasmic. The chain crosses the membrane as a helical span at residues 140–158 (VCLLLASGCWFVGSVDGFM). At 159-195 (LTPIAMSFPFCRSHEIQHFFCEVPAVLKLSCSDTSLY) the chain is on the extracellular side. Residues 196-219 (KIFMYLCCVIMLLIPVTVISVSYY) traverse the membrane as a helical segment. Residues 220-236 (YIILTIHKMNSVEGRKK) are Cytoplasmic-facing. The chain crosses the membrane as a helical span at residues 237-259 (AFTTCSSHITVVSLFYGAAIYNY). Residues 260-272 (MLPSSYQTPEKDM) are Extracellular-facing. Residues 273–292 (MSSFFYTILTPVLNPIIYSF) form a helical membrane-spanning segment. The Cytoplasmic segment spans residues 293–312 (RNKDVTRALKKMLSVQKPPY).

It belongs to the G-protein coupled receptor 1 family.

Its subcellular location is the cell membrane. Odorant receptor. The protein is Olfactory receptor 2T10 (OR2T10) of Homo sapiens (Human).